A 380-amino-acid chain; its full sequence is Chromo domain-containing protein 2 (380 aa).

Disordered regions lie at residues 14-58 (ISES…SLYG) and 100-156 (KLSP…VPLN). Residues 33–52 (NSINNKSSTASLESPQNGSW) show a composition bias toward polar residues. Acidic residues predominate over residues 108-119 (EDSEDKKEEDES). Residues 121–140 (SYKNEFKSSSSASVSSNFEK) are compositionally biased toward low complexity. The Chromo domain maps to 176–238 (FAVEMILDSR…SRGGKPDLSS (63 aa)). The disordered stretch occupies residues 250–273 (SNEASYVEKDESSNSDDSISYKRR).

Its subcellular location is the nucleus. Its function is as follows. Component of the kinetochore which plays a role in stabilizing microtubules and so allowing accurate chromosome segregation. The protein is Chromo domain-containing protein 2 (chp2) of Schizosaccharomyces pombe (strain 972 / ATCC 24843) (Fission yeast).